The following is a 605-amino-acid chain: Podocalyxin-like protein 2 (605 aa).

The signal sequence occupies residues 1–32; sequence MGRLLRAARLPPLLSPLLLLLVGGAFLGACVA. At 33–500 the chain is on the extracellular side; the sequence is GSDEPGPEGL…ASQVRSDYGT (468 aa). Residue Ser79 is glycosylated (O-linked (Xyl...) (chondroitin sulfate) serine). A sulfotyrosine mark is found at Tyr97 and Tyr118. The segment at 129–134 is O-glycosylated at one site; the sequence is SIEDTS. A disordered region spans residues 129–347; it reads SIEDTSQAQE…PGDMELTPSS (219 aa). A glycan (O-linked (GalNAc...) serine) is linked at Ser144. The segment covering 162 to 189 has biased composition (acidic residues); it reads EEEEEEEEEEEREKEEVEKQEEEEEEEL. Asn193 carries N-linked (GlcNAc...) asparagine glycosylation. Over residues 207 to 217 the composition is skewed to polar residues; that stretch reads SLTSSSQTPGA. 2 stretches are compositionally biased toward low complexity: residues 241-255 and 288-298; these read PSLL…TVTP and EATAGAAGLSG. Asn395 carries N-linked (GlcNAc...) asparagine glycosylation. Residues 501–521 form a helical membrane-spanning segment; it reads LFVVLVVIGAICIIIIALGLL. Topologically, residues 522 to 605 are cytoplasmic; the sequence is YNCWQRRLPK…SDVFEEDTHL (84 aa). Residues 554–605 are disordered; sequence LDVASDSQSEMQEKHPSLNGGGALNGPGSWGALMGGKRDPEDSDVFEEDTHL. Residue Ser570 is modified to Phosphoserine. Residues 572 to 582 are compositionally biased toward gly residues; the sequence is NGGGALNGPGS. Acidic residues predominate over residues 594–605; that stretch reads EDSDVFEEDTHL. Ser596 is modified (phosphoserine).

Belongs to the podocalyxin family. As to quaternary structure, homodimer; disulfide-linked. Interacts with SELL, SELE and SELP. Post-translationally, O-glycosylated; contains chondroitin sulfate. Displays sialylated O-linked oligosaccharides. In terms of processing, sulfation is necessary for interaction with SELL. Sialylated O-linked oligosaccharides are necessary for interaction with SELL, SELE and SELP. As to expression, expressed in T-cells, B-cells and monocytes. Expression is higher on memory and germinal center cells than on naive B-cells (at protein level). Highly expressed in brain. Moderately expressed in pancreas, kidney and lymphoid node. Weakly expressed in liver. Detected in both endothelial cells and CD34+ bone marrow cells.

The protein resides in the membrane. Its function is as follows. Acts as a ligand for vascular selectins. Mediates rapid rolling of leukocytes over vascular surfaces through high affinity divalent cation-dependent interactions with E-, P- and L-selectins. This chain is Podocalyxin-like protein 2 (PODXL2), found in Homo sapiens (Human).